The chain runs to 1004 residues: Protein Wnt-5 (1004 aa).

Positions 1 to 29 (MSCYRKRHFLLWLLRAVCMLHLTARGAYA) are cleaved as a signal peptide. 4 N-linked (GlcNAc...) asparagine glycosylation sites follow: asparagine 60, asparagine 66, asparagine 115, and asparagine 219. A disordered region spans residues 238-298 (QKDKAKTSGA…NPGEQPIGGY (61 aa)). Asparagine 307 and asparagine 341 each carry an N-linked (GlcNAc...) asparagine glycan. The disordered stretch occupies residues 310 to 407 (LLKPTDTDSH…ERDEWFRGQS (98 aa)). The segment covering 389-403 (RREEQQRQRERDEWF) has biased composition (basic and acidic residues). Residue asparagine 422 is glycosylated (N-linked (GlcNAc...) asparagine). The tract at residues 438 to 472 (KVSSEGSDGELLSRVERSQPSISSSSSSSSSSSRK) is disordered. Over residues 458–470 (SISSSSSSSSSSS) the composition is skewed to low complexity. N-linked (GlcNAc...) asparagine glycans are attached at residues asparagine 484, asparagine 485, asparagine 528, and asparagine 593. Disulfide bonds link cysteine 583–cysteine 594, cysteine 633–cysteine 641, and cysteine 643–cysteine 661. Asparagine 724 carries an N-linked (GlcNAc...) asparagine glycan. The disordered stretch occupies residues 790–822 (FFKGEQQPRKKKRKNQRAAADAPAYPRNGIKES). 8 disulfide bridges follow: cysteine 862–cysteine 876, cysteine 864–cysteine 871, cysteine 933–cysteine 964, cysteine 949–cysteine 959, cysteine 963–cysteine 1003, cysteine 979–cysteine 994, cysteine 981–cysteine 991, and cysteine 986–cysteine 987. The O-palmitoleoyl serine; by PORCN moiety is linked to residue serine 868. Asparagine 952 carries an N-linked (GlcNAc...) asparagine glycan.

Belongs to the Wnt family. Interacts with porcupine (por). In terms of processing, glycosylated, glycosylation is stimulated by porcupine at the ER. Palmitoleoylated by porcupine. The lipid group functions as a sorting signal, targeting the ligand to polarized vesicles that transport Wnt5 to unique sites at the cell surface. Depalmitoleoylated by notum, leading to inhibit Wnt signaling pathway. As to expression, dynamic expression pattern during embryogenesis. Expression is seen in the limb primordia of the head and thoracic segments, mesodermal and neurogenic regions.

It is found in the secreted. Its subcellular location is the extracellular space. The protein resides in the extracellular matrix. Binds as a ligand to a family of frizzled seven-transmembrane receptors and acts through a cascade of genes on the nucleus. Probable developmental protein. May be a signaling molecule which affects the development of discrete regions of tissues. Is likely to signal over only few cell diameters. May have a role in limb and CNS development; may be a downstream target of Dll that acts in the specification of these primordia. In Drosophila melanogaster (Fruit fly), this protein is Protein Wnt-5 (Wnt5).